The following is a 283-amino-acid chain: Formamidopyrimidine-DNA glycosylase (283 aa).

The active-site Schiff-base intermediate with DNA is Pro-2. Glu-3 acts as the Proton donor in catalysis. The Proton donor; for beta-elimination activity role is filled by Lys-58. The DNA site is built by His-100, Arg-119, and Lys-162. An FPG-type zinc finger spans residues 247-283; it reads RVYGREGQRCQTPDCAEKILRKVQSGRSSFYCPACQR. The Proton donor; for delta-elimination activity role is filled by Arg-273.

Belongs to the FPG family. Monomer. Zn(2+) serves as cofactor.

The catalysed reaction is Hydrolysis of DNA containing ring-opened 7-methylguanine residues, releasing 2,6-diamino-4-hydroxy-5-(N-methyl)formamidopyrimidine.. It catalyses the reaction 2'-deoxyribonucleotide-(2'-deoxyribose 5'-phosphate)-2'-deoxyribonucleotide-DNA = a 3'-end 2'-deoxyribonucleotide-(2,3-dehydro-2,3-deoxyribose 5'-phosphate)-DNA + a 5'-end 5'-phospho-2'-deoxyribonucleoside-DNA + H(+). Its function is as follows. Involved in base excision repair of DNA damaged by oxidation or by mutagenic agents. Acts as a DNA glycosylase that recognizes and removes damaged bases. Has a preference for oxidized purines, such as 7,8-dihydro-8-oxoguanine (8-oxoG). Has AP (apurinic/apyrimidinic) lyase activity and introduces nicks in the DNA strand. Cleaves the DNA backbone by beta-delta elimination to generate a single-strand break at the site of the removed base with both 3'- and 5'-phosphates. This is Formamidopyrimidine-DNA glycosylase from Jannaschia sp. (strain CCS1).